The chain runs to 121 residues: UPF0091 protein PH1428 (121 aa).

The protein belongs to the UPF0091 family.

The chain is UPF0091 protein PH1428 from Pyrococcus horikoshii (strain ATCC 700860 / DSM 12428 / JCM 9974 / NBRC 100139 / OT-3).